Reading from the N-terminus, the 423-residue chain is Glutamate-1-semialdehyde 2,1-aminomutase (423 aa).

The residue at position 259 (Lys-259) is an N6-(pyridoxal phosphate)lysine.

It belongs to the class-III pyridoxal-phosphate-dependent aminotransferase family. HemL subfamily. As to quaternary structure, homodimer. Pyridoxal 5'-phosphate serves as cofactor.

It localises to the cytoplasm. It carries out the reaction (S)-4-amino-5-oxopentanoate = 5-aminolevulinate. It participates in porphyrin-containing compound metabolism; protoporphyrin-IX biosynthesis; 5-aminolevulinate from L-glutamyl-tRNA(Glu): step 2/2. The protein is Glutamate-1-semialdehyde 2,1-aminomutase of Thermosipho africanus (strain TCF52B).